The primary structure comprises 866 residues: Rifampicin phosphotransferase (866 aa).

Residues 1–313 form an ATP-binding region; the sequence is MSSLVLGLHE…FYIVQSRPIT (313 aa). ATP-binding residues include lysine 22, arginine 116, glycine 131, threonine 135, glutamine 182, glutamate 296, glutamine 308, and arginine 310. The segment at 326–754 is rifampicin-binding; sequence NHVYISVGHQ…TSDGEIVTGE (429 aa). A disordered region spans residues 410–429; that stretch reads IPNDKTAPNPSRGNADMPAQ. A swivel phosphohistidine region spans residues 767-865; it reads GLPVSSGVIE…VHGTEGYIEI (99 aa). Histidine 825 functions as the Tele-phosphohistidine intermediate in the catalytic mechanism.

This sequence belongs to the rifampicin phosphotransferase family.

It catalyses the reaction rifampicin + ATP + H2O = 21-phosphorifampicin + AMP + phosphate + 2 H(+). Its function is as follows. Catalyzes the phosphorylation of rifampicin, also known as rifampin (RIF), leading to its inactivation. The chain is Rifampicin phosphotransferase from Bacillus subtilis (strain 168).